A 178-amino-acid chain; its full sequence is Ribosome maturation factor RimM (178 aa).

The 78-residue stretch at 93-170 folds into the PRC barrel domain; the sequence is EGSYYYHELR…ALTADAPAGL (78 aa).

It belongs to the RimM family. Binds ribosomal protein uS19.

The protein resides in the cytoplasm. An accessory protein needed during the final step in the assembly of 30S ribosomal subunit, possibly for assembly of the head region. Essential for efficient processing of 16S rRNA. May be needed both before and after RbfA during the maturation of 16S rRNA. It has affinity for free ribosomal 30S subunits but not for 70S ribosomes. The sequence is that of Ribosome maturation factor RimM from Deinococcus geothermalis (strain DSM 11300 / CIP 105573 / AG-3a).